A 124-amino-acid polypeptide reads, in one-letter code: Fluoride-specific ion channel FluC (124 aa).

The next 3 membrane-spanning stretches (helical) occupy residues 36-56, 63-83, and 99-119; these read VGTM…VVVL, YAPF…AFSL, and AYVG…MAAV. Na(+) contacts are provided by Gly73 and Thr76.

Belongs to the fluoride channel Fluc/FEX (TC 1.A.43) family.

The protein localises to the cell inner membrane. It catalyses the reaction fluoride(in) = fluoride(out). Its activity is regulated as follows. Na(+) is not transported, but it plays an essential structural role and its presence is essential for fluoride channel function. Functionally, fluoride-specific ion channel. Important for reducing fluoride concentration in the cell, thus reducing its toxicity. The sequence is that of Fluoride-specific ion channel FluC from Cereibacter sphaeroides (strain ATCC 17029 / ATH 2.4.9) (Rhodobacter sphaeroides).